The chain runs to 1211 residues: DNA-directed RNA polymerase subunit beta' (1211 aa).

Zn(2+)-binding residues include C60, C62, C75, and C78. The Mg(2+) site is built by D450, D452, and D454. Zn(2+)-binding residues include C819, C893, C900, and C903.

It belongs to the RNA polymerase beta' chain family. The RNAP catalytic core consists of 2 alpha, 1 beta, 1 beta' and 1 omega subunit. When a sigma factor is associated with the core the holoenzyme is formed, which can initiate transcription. The cofactor is Mg(2+). Requires Zn(2+) as cofactor.

The enzyme catalyses RNA(n) + a ribonucleoside 5'-triphosphate = RNA(n+1) + diphosphate. In terms of biological role, DNA-dependent RNA polymerase catalyzes the transcription of DNA into RNA using the four ribonucleoside triphosphates as substrates. The polypeptide is DNA-directed RNA polymerase subunit beta' (Streptococcus equi subsp. equi (strain 4047)).